The chain runs to 136 residues: uncharacterized protein (136 aa).

It belongs to the MG439/MG440 family.

This is an uncharacterized protein from Mycoplasma pneumoniae (strain ATCC 29342 / M129 / Subtype 1) (Mycoplasmoides pneumoniae).